Reading from the N-terminus, the 487-residue chain is Berbamunine synthase (487 aa).

C429 serves as a coordination point for heme.

It belongs to the cytochrome P450 family. The cofactor is heme.

It is found in the endoplasmic reticulum membrane. Its subcellular location is the microsome membrane. It catalyses the reaction (R)-N-methylcoclaurine + (S)-N-methylcoclaurine + reduced [NADPH--hemoprotein reductase] + O2 = berbamunine + oxidized [NADPH--hemoprotein reductase] + 2 H2O + H(+). It functions in the pathway alkaloid biosynthesis; berbamunine biosynthesis; berbamunine from (R)-N-methylcoclaurine and (S)-N-methylcoclaurine: step 1/1. Its function is as follows. Forms the bisbenzylisoquinoline alkaloid berbamunine by phenol oxidation of N-methylcoclaurine without the incorporation of oxygen into the product. Oxidatively couples either two molecules of (R)-N-methylcoclaurine to form the (R,R) dimer guattegaumerine or one molecule each of (R)- and (S)-N-methylcoclaurine to form the (R,S) dimer berbamunine. This is Berbamunine synthase (CYP80A1) from Berberis stolonifera (Barberry).